We begin with the raw amino-acid sequence, 303 residues long: Protoheme IX farnesyltransferase (303 aa).

The next 6 helical transmembrane spans lie at 25 to 45 (MGLVQGNLIPAFAGAWLAIVM), 54 to 74 (IPQILLMLVGSTLIMGGACAL), 118 to 138 (CLFLLNIPSGVLGLIGIVGYV), 166 to 186 (IGWVAIDGSLSLAAVALFLVV), 230 to 250 (LVLLLPLPFLLSNLGVTFVVI), and 280 to 300 (FVYSLNYLVVFFALVVVVSLI).

The protein belongs to the UbiA prenyltransferase family. Protoheme IX farnesyltransferase subfamily. Interacts with CtaA.

Its subcellular location is the cell membrane. The catalysed reaction is heme b + (2E,6E)-farnesyl diphosphate + H2O = Fe(II)-heme o + diphosphate. It participates in porphyrin-containing compound metabolism; heme O biosynthesis; heme O from protoheme: step 1/1. Its function is as follows. Converts heme B (protoheme IX) to heme O by substitution of the vinyl group on carbon 2 of heme B porphyrin ring with a hydroxyethyl farnesyl side group. This chain is Protoheme IX farnesyltransferase, found in Staphylococcus epidermidis (strain ATCC 12228 / FDA PCI 1200).